The chain runs to 215 residues: MOB kinase activator-like 1B (215 aa).

A disordered region spans residues 1–29 (MSLFGLGSRNQKTFRPKKSAPTGSKGAQL). Zn(2+)-binding residues include C80, C85, H162, and H167.

The protein belongs to the MOB1/phocein family. As to expression, constitutively expressed with higher expression in roots, flowers and pods than in leaves and stems.

It is found in the cytoplasm. The protein resides in the cytoskeleton. The protein localises to the phragmoplast. This Medicago sativa subsp. falcata (Sickle medic) protein is MOB kinase activator-like 1B.